Consider the following 1142-residue polypeptide: Envelopment polyprotein (1142 aa).

Residues methionine 1–threonine 21 form the signal peptide. Residues arginine 22–serine 489 are Lumenal-facing. Cystine bridges form between cysteine 31-cysteine 156, cysteine 65-cysteine 162, cysteine 114-cysteine 133, cysteine 138-cysteine 143, cysteine 180-cysteine 190, and cysteine 215-cysteine 253. Residue asparagine 139 is glycosylated (N-linked (GlcNAc...) asparagine; by host). N-linked (GlcNAc...) asparagine; by host glycosylation is present at asparagine 353. Cystine bridges form between cysteine 382/cysteine 441, cysteine 386/cysteine 395, cysteine 411/cysteine 430, and cysteine 458/cysteine 481. Asparagine 405 carries an N-linked (GlcNAc...) asparagine; by host glycan. A helical transmembrane segment spans residues threonine 490–valine 510. Residues serine 511–cysteine 633 are Cytoplasmic-facing. The segment at cysteine 522 to lysine 539 is binding to the ribonucleoprotein. 2 consecutive CCHC-type zinc fingers follow at residues cysteine 551–cysteine 571 and cysteine 576–cysteine 597. 3 binding to the ribonucleoprotein regions span residues phenylalanine 594 to leucine 611, lysine 598 to lysine 609, and lysine 617 to serine 631. The ITAM domain occupies lysine 617–cysteine 640. A YxxL motif is present at residues tyrosine 621–leucine 624. A helical membrane pass occupies residues phenylalanine 634–alanine 654. The Lumenal segment spans residues aspartate 655–asparagine 1110. 8 disulfides stabilise this stretch: cysteine 741–cysteine 776, cysteine 745–cysteine 783, cysteine 757–cysteine 890, cysteine 771–cysteine 901, cysteine 786–cysteine 909, cysteine 812–cysteine 821, cysteine 829–cysteine 838, and cysteine 869–cysteine 873. Positions tyrosine 763 to cysteine 783 are fusion loop. N-linked (GlcNAc...) asparagine; by host glycosylation occurs at asparagine 933. 5 cysteine pairs are disulfide-bonded: cysteine 975–cysteine 1005, cysteine 998–cysteine 1050, cysteine 1015–cysteine 1020, cysteine 1051–cysteine 1056, and cysteine 1090–cysteine 1094. The chain crosses the membrane as a helical span at residues tryptophan 1111 to cysteine 1131. Positions leucine 1127–serine 1142 are binding to the ribonucleoprotein. Residues cysteine 1132–serine 1142 are Cytoplasmic-facing.

It belongs to the hantavirus envelope glycoprotein family. Homodimer. Homotetramer; forms heterotetrameric Gn-Gc spikes in the pre-fusion conformation. Interacts (via C-terminus) with the nucleoprotein. Interacts with host TUFM; this interaction contributes to the virus-induced degradation of mitochondria by autophagy, which leads to degradation of host MAVS and inhibition of type I interferon (IFN) responses. Interacts with host MAP1LC3B; this interaction contributes to the virus-induced degradation of mitochondria by autophagy, which leads to degradation of host MAVS and inhibition of type I interferon (IFN) responses. As to quaternary structure, homodimer. Homotetramer; forms heterotetrameric Gn-Gc spikes in the pre-fusion conformation. Homotrimer; forms homotrimer in the post-fusion conformation at acidic pH. Interacts (via C-terminus) with the nucleoprotein. Envelope polyprotein precursor is quickly cleaved in vivo just after synthesis, presumably by host signal peptidase.

The protein localises to the virion membrane. It localises to the host cell surface. The protein resides in the host Golgi apparatus membrane. Its subcellular location is the host endoplasmic reticulum membrane. It is found in the host mitochondrion. In terms of biological role, forms homotetramers with glycoprotein C at the surface of the virion. Attaches the virion to host cell receptors including integrin alpha5/ITGB1. This attachment induces virion internalization predominantly through clathrin-dependent endocytosis. Mediates the assembly and budding of infectious virus particles through its interaction with the nucleocapsid protein and the viral genome. May dysregulate normal immune and endothelial cell responses through an ITAM motif. Translocates to mitochondria, binds to host TUFM and recruits MAP1LC3B. These interactions induce mitochondrial autophagy and therefore destruction of host MAVS leading to inhibition of type I interferon (IFN) responses. Concomitant breakdown of glycoprotein N is apparently prevented by the nucleoprotein that may inhibit Gn-stimulated autophagosome-lysosome fusion. Interacts with the viral genomic RNA. Functionally, forms homotetramers with glycoprotein N at the surface of the virion. Attaches the virion to host cell receptors including integrin ITGAV/ITGB3. This attachment induces virion internalization predominantly through clathrin-dependent endocytosis. Class II fusion protein that promotes fusion of viral membrane with host endosomal membrane after endocytosis of the virion. This is Envelopment polyprotein (GP) from Microtus pennsylvanicus (Meadow vole).